The chain runs to 959 residues: MNFLRGVMGGQSAGPQHTEAETIQKLCDRVASSTLLDDRRNAVRALKSLSKKYRLEVGIQAMEHLIHVLQTDRSDSEIIAYALDTLYNIISNDEEEELEENSTRQSEDLGSQFTEIFIKQPENVTLLLSLLEEFDFHVRWPGVRLLTSLLKQLGPPVQQIILVSPMGVSRLMDLLADSREIIRNDGVLLLQALTRSNGAIQKIVAFENAFERLLDIITEEGNSDGGIVVEDCLILLQNLLKTNNSNQNFFKEGSYIQRMKPWFEVGEENSGWSAQKVTNLHLMLQLVRVLVSPTNPPGATSSCQKAMFQCGLLQQLCTILMATGIPADILTETINTVSEVIRGCQVNQDYFASVNAPSNPPRPAIVVLLMSMVNERQPFVLRCAVLYCFQCFLYKNEKGQGEIVATLLPSTIDATGNSVSAGQLLCGGLFSTDSLSNWCAAVALAHALQGNATQKEQLLRVQLATSIGNPPVSLLQQCTNILSQGSKIQTRVGLLMLLCTWLSNCPIAVTHFLHNSANVPFLTGQIAENLGEEEQLVQGLCALLLGISIYFNDNSLENYTKEKLKQLIEKRIGKENFIEKLGFISKHELYSRASQKPQPNFPSPEYMIFDHEFTKLVKELEGVITKAIYKSSEEDKKEEEVKKTLEQHDNIVTHYKNMIREQDLQLEELKQQVSTLKCQNEQLQTAVTQQASQIQQHKDQYNLLKVQLGKDNHHQGSHGDGAQVNGIQPEEISRLREEIEELKSQQALLQGQLAEKDSLIENLKSSQASGMSEQASATCPPRDPEQVAELKQELTALKSQLCSQSLEITRLQTENCELLQRAETLAKSVPVEGESEHVSAAKTTDVEGRLSALLQETKELKNEIKALSEERTAIQKQLDSSNSTIAILQTEKDKLDLEVTDSKKEQDDLLVLLADQDQKILSLKSKLKDLGHPVEEEDESGDQEDDDDEIDDGDKDQDI.

A globular head region spans residues 1-637; sequence MNFLRGVMGG…IYKSSEEDKK (637 aa). ARM repeat units lie at residues 20–60, 61–121, 123–163, 166–207, 208–253, 255–310, 311–354, 363–408, 420–459, 473–513, 518–571, and 573–630; these read AETI…VGIQ, AMEH…IKQP, NVTL…IILV, MGVS…VAFE, NAFE…FKEG, YIQR…MFQC, GLLQ…FASV, PAIV…ATLL, SAGQLLCGGLFSTDSLSNWCAAVALAHALQGNATQKEQLL, SLLQ…THFL, NVPF…IEKR, and GKEN…AIYK. At Ser50 the chain carries Phosphoserine. An N6-acetyllysine modification is found at Lys202. Positions 638-930 form a coiled coil; the sequence is EEEVKKTLEQ…LSLKSKLKDL (293 aa). Positions 925-959 are disordered; the sequence is SKLKDLGHPVEEEDESGDQEDDDDEIDDGDKDQDI. Residues 935–959 show a composition bias toward acidic residues; the sequence is EEEDESGDQEDDDDEIDDGDKDQDI. The residue at position 940 (Ser940) is a Phosphoserine.

Belongs to the VDP/USO1/EDE1 family. Homodimer. Dimerizes by parallel association of the tails, resulting in an elongated structure with two globular head domains side by side, and a long rod-like tail structure. Interacts with MIF. In terms of processing, phosphorylated in a cell cycle-specific manner; phosphorylated in interphase but not in mitotic cells. Dephosphorylated protein associates with the Golgi membrane; phosphorylation promostes dissociation.

Its subcellular location is the cytoplasm. The protein resides in the cytosol. It localises to the golgi apparatus membrane. Its function is as follows. General vesicular transport factor required for intercisternal transport in the Golgi stack; it is required for transcytotic fusion and/or subsequent binding of the vesicles to the target membrane. May well act as a vesicular anchor by interacting with the target membrane and holding the vesicular and target membranes in proximity. This Mus musculus (Mouse) protein is General vesicular transport factor p115 (Uso1).